The sequence spans 541 residues: MTATVQHTVKTEVCLRGDVASQPISDSKPPTWVAVLQQHEYQSSVTYHKLDDNRLIPDVFGYSYLRDIADQGKKQSTGKQHARVIQAYSKIHSLLSPPWKSSSIDSNTKTRENKGSPVILEDKRCAFIERLEPPPNSKADIVSTVFAQVNLQTPTGPPLEQFLSCRASNIKANDLKNAAEGVRRPITISTGICLFSSRLLGFIPTNGLSVSHDATETVVPPLPYTTVATFYELETCTRMAMTIAGLAVTASTGGTAGSRPIVVRLDVPNLQYYCYPLELLEAGLVSWEYVEEWFRLVDRRHRQVATLLKDTIIHEVRRRNCDVQVDVTSGTIAATQLLRLCVLGRRKIPSVNDMLFVLSWIGPYQAAWREFLAIVDDCQRPKDLRSLALMAYVFEVMYPALQQATTKTKTPHGKGEESSGRPLLIQVDDIAEWRIFDRAEMLLKRFKHRQHGLDPLLVGVFPSPRIFTSEDQGRSTLFLHDPGLKISQTRPPSSGGDSEDHSCVVGPLDIIGQIYGAEVQDTLMRLIIERGLSPEDEFELD.

The short motif at 428–432 is the Conserved DDXXE motif element; that stretch reads DDIAE.

This sequence belongs to the arginine-containing cyclodipeptide synthase family.

It carries out the reaction L-tryptophyl-tRNA(Trp) + L-arginyl-tRNA(Arg) = cyclo(L-arginyl-L-tryptophyl) + tRNA(Trp) + tRNA(Arg) + H(+). Its pathway is secondary metabolite biosynthesis. Arginine-containing cyclodipeptide synthase; part of the cluster that mediates the biosynthesis of a highly modified cyclo-arginine-tryptophan dipeptide (cRW). Within the pathway, avaA acts as the scaffold-generating enzyme and is responsible for formation of the cyclo-Arg-Trp diketopiperazine (cRW) from L-arginyl-tRNA(Arg) + L-tryptophanyl-tRNA(Trp). AvaB then acts as a multifunctional flavoenzyme that is responsible for generating the cyclo-Arg-formylkynurenine DKP, which can be deformylated by avaC. AvaB then catalyzes an additional N-oxidation followed by cyclization and dehydration. The next step is an N-acetylation of the guanidine group catalyzed by the arginine N-acetyltransferase AvaD. The role of the additional enzymes identified within the ava cluster still have to be determined. The polypeptide is Arginine-containing cyclodipeptide synthase avaA (Aspergillus versicolor).